Consider the following 523-residue polypeptide: BTB/POZ domain-containing protein 3 (523 aa).

An ANK repeat occupies 85–114; the sequence is FDYSPLVLASLCGHEPVVKFLLENGALCER. BTB domains are found at residues 167 to 223 and 306 to 373; these read TDIV…RYLY and HDAY…DIAP.

As to quaternary structure, interacts with cul3. Post-translationally, ubiquitinated and targeted for cul3-dependent degradation.

It localises to the cytoplasm. The protein operates within protein modification; protein ubiquitination. Its function is as follows. Probable substrate-specific adapter of an E3 ubiquitin-protein ligase complex which mediates the ubiquitination and subsequent proteasomal degradation of target proteins. The chain is BTB/POZ domain-containing protein 3 (btb3) from Schizosaccharomyces pombe (strain 972 / ATCC 24843) (Fission yeast).